Here is a 366-residue protein sequence, read N- to C-terminus: DNA double-strand break repair protein Mre11 (366 aa).

Residues Asp-8, His-10, Asp-49, and Asn-84 each contribute to the Mn(2+) site. The Proton donor role is filled by His-85. Residues His-158, His-186, and His-188 each coordinate Mn(2+).

Belongs to the MRE11/RAD32 family. In terms of assembly, homodimer. Forms a heterotetramer composed of two Mre11 subunits and two Rad50 subunits. The cofactor is Mn(2+).

Nuclease activity is regulated by Rad50. Part of the Rad50/Mre11 complex, which is involved in the early steps of DNA double-strand break (DSB) repair. The complex may facilitate opening of the processed DNA ends to aid in the recruitment of HerA and NurA. Mre11 binds to DSB ends and has both double-stranded 3'-5' exonuclease activity and single-stranded endonuclease activity. The chain is DNA double-strand break repair protein Mre11 from Methanocaldococcus jannaschii (strain ATCC 43067 / DSM 2661 / JAL-1 / JCM 10045 / NBRC 100440) (Methanococcus jannaschii).